Reading from the N-terminus, the 359-residue chain is Mitochondrial glutathione transporter SLC25A39 (359 aa).

Over 1-14 the chain is Mitochondrial intermembrane; sequence MADQDPAGISPLQQ. Solcar repeat units follow at residues 9 to 151, 159 to 243, and 253 to 347; these read ISPL…LKAF, SDLY…VKSW, and TSVG…GKSF. Residues 15-35 form a helical membrane-spanning segment; the sequence is MVASGTGAVVTSLFMTPLDVV. Residues 36–121 are Mitochondrial matrix-facing; that stretch reads KVRLQSQRPS…VKIVRHEGTR (86 aa). [2Fe-2S] cluster is bound by residues Cys74, Cys78, Cys88, and Cys94. Residues 122 to 142 traverse the membrane as a helical segment; it reads TLWSGLPATLVMTVPATAIYF. Over 143–160 the chain is Mitochondrial intermembrane; the sequence is TAYDQLKAFLCGRALTSD. Residues 161–181 form a helical membrane-spanning segment; the sequence is LYAPMVAGALARLGTVTVISP. The Mitochondrial matrix portion of the chain corresponds to 182 to 214; it reads LELMRTKLQAQHVSYRELGACVRTAVAQGGWRS. Residues 215-235 traverse the membrane as a helical segment; it reads LWLGWGPTALRDVPFSALYWF. Residues 236–258 lie on the Mitochondrial intermembrane side of the membrane; it reads NYELVKSWLNGFRPKDQTSVGMS. A helical membrane pass occupies residues 259-279; sequence FVAGGISGTVAAVLTLPFDVV. Residues 280 to 317 are Mitochondrial matrix-facing; sequence KTQRQVALGAMEAVRVNPLHVDSTWLLLRRIRAESGTK. Residues 318–338 form a helical membrane-spanning segment; the sequence is GLFAGFLPRIIKAAPSCAIMI. Residues 339 to 359 are Mitochondrial intermembrane-facing; that stretch reads STYEFGKSFFQRLNQDRLLGG.

This sequence belongs to the mitochondrial carrier (TC 2.A.29) family. Post-translationally, cleaved and degraded by AFG3L2; degradation by AFG3L2 is regulated by the ability of SLC25A39 to bind iron-sulfur. In absence of mitochondrial glutathione, SLC25A39 binds iron-sulfur, preventing cleavage and degradation by AFG3L2. The presence of mitochondrial glutathione prevents iron-sulfur-binding to SLC25A39, promoting cleavage and degradation by AFG3L2. As to expression, expressed in many tissues. Abundant in testis and kidney.

Its subcellular location is the mitochondrion inner membrane. The catalysed reaction is glutathione(in) = glutathione(out). With respect to regulation, the activity of SLC25A39 is regulated by levels of mitochondrial glutathione via its ability to bind [2Fe-2S] iron-sulfur cluster. Upon physiological levels of mitochondrial glutathione, glutathione prevents iron-sulfur-binding to SLC25A39 promoting cleavage and degradation by AFG3L2. Upon depletion of mitochondrial glutathione, SLC25A39 binds iron-sulfur, preventing cleavage and degradation by AFG3L2. In terms of biological role, mitochondrial transporter required for glutathione import into mitochondria. Glutathione, which plays key roles in oxidative metabolism, is produced exclusively in the cytosol and is imported in many organelles. Mitochondrial glutathione is required for the activity and stability of proteins containing iron-sulfur clusters, as well as erythropoiesis. This chain is Mitochondrial glutathione transporter SLC25A39, found in Homo sapiens (Human).